The following is a 105-amino-acid chain: Large ribosomal subunit protein eL36 (105 aa).

This sequence belongs to the eukaryotic ribosomal protein eL36 family. Component of the large ribosomal subunit.

It localises to the cytoplasm. The protein localises to the cytosol. Component of the large ribosomal subunit. The ribosome is a large ribonucleoprotein complex responsible for the synthesis of proteins in the cell. The polypeptide is Large ribosomal subunit protein eL36 (RPL36) (Gallus gallus (Chicken)).